The primary structure comprises 1084 residues: Transcription elongation factor SPT5 (1084 aa).

The disordered stretch occupies residues 1–91 (MSDSEDSDFS…DDEYEDEDPW (91 aa)). Acidic residues-rich tracts occupy residues 20–32 (AEEV…EEEQ), 41–62 (AEEE…EEDD), and 77–91 (DEAD…EDPW). Positions 175–269 (DPNLWTVKCK…TDVLKVVKEV (95 aa)) are interaction with SUPT4H1. KOW domains are found at residues 272 to 305 (LKPK…ISLK), 419 to 450 (LQAG…ITIM), 471 to 502 (FRMG…VILF), and 593 to 626 (IHVK…LHCK). Residues 312–419 (LDRIKARMSM…TTGKEREHNL (108 aa)) are interaction with RNA polymerase II. Serine 665 carries the phosphoserine modification. Residues 667–700 (RISSPMHPGGGGQPQRGGGGGGGGGMGRGRGRRD) form a disordered region. The span at 674-694 (PGGGGQPQRGGGGGGGGGMGR) shows a compositional bias: gly residues. A KOW 5 domain is found at 702-735 (DLIGQTVRISQGPYKGYIGVVKDATESTARVELH). A disordered region spans residues 748–973 (LTTVGGKERQ…HTPGSNIDQA (226 aa)). A CTR1-1; approximate repeat occupies 758-763 (GRSSTH). Residues 758–815 (GRSSTHLRTPMYGSQTPIYGTGSRTPMYGSQTPLHDGSRTPHYGSQTPLHDGSRTPGQ) are 8 X 7 AA approximate tandem repeats of G-S-[QR]-T-P-X-[YQ], motif CTR1. Residues 759–790 (RSSTHLRTPMYGSQTPIYGTGSRTPMYGSQTP) are compositionally biased toward polar residues. A CTR1-2; approximate repeat occupies 764-769 (LRTPMY). A CTR1-3 repeat occupies 770-776 (GSQTPIY). 2 positions are modified to phosphothreonine; by CDK9: threonine 773 and threonine 782. One copy of the CTR1-4 repeat lies at 779 to 785 (GSRTPMY). One copy of the CTR1-5 repeat lies at 786–792 (GSQTPLH). One copy of the CTR1-6 repeat lies at 794-800 (GSRTPHY). One copy of the CTR1-7 repeat lies at 801–807 (GSQTPLH). A CTR1-8 repeat occupies 809 to 815 (GSRTPGQ). The segment covering 832–842 (DEYEFAYDDEP) has biased composition (acidic residues). A CTR2-1 repeat occupies 842–849 (PSPSPQGY). Positions 842 to 948 (PSPSPQGYGG…ASPSPSPVGY (107 aa)) are 10 X 8 AA approximate tandem repeats of P-[TS]-P-S-P-[QA]-[SG]-Y, motif CTR2. The CTR2-2; approximate repeat unit spans residues 852-860 (TPNPQTPGY). The span at 855-864 (PQTPGYPEVP) shows a compositional bias: pro residues. A CTR2-3; approximate repeat occupies 861–867 (PEVPSPQ). A compositionally biased stretch (polar residues) spans 866–888 (PQVNPQYNPQTPGTPAMYNTDQY). The stretch at 879–883 (TPAMY) is one CTR2-4; half-length repeat. A CTR2-5; approximate repeat occupies 894 to 900 (PSPQGSY). The span at 894–909 (PSPQGSYQPSPSPQSY) shows a compositional bias: low complexity. Residues 902-909 (PSPSPQSY) form a CTR2-6 repeat. The stretch at 914-919 (PSPVGY) is one CTR2-7; approximate repeat. The stretch at 922-928 (THSPASY) is one CTR2-8 repeat. One copy of the CTR2-9 repeat lies at 930–937 (PTPSPMAY). Residues 941 to 948 (PSPSPVGY) form a CTR2-10 repeat.

This sequence belongs to the SPT5 family. As to quaternary structure, interacts with SUPT4H1 to form the DSIF complex. DSIF interacts with RNA polymerase II and with the positive transcription elongation factor b complex (P-TEFb complex), which is composed of CDK9 and cyclin-T. Phosphorylated. Phosphorylation by P-TEFb (CDK9) at Thr residues of the C-terminal repeats alleviates transcriptional pausing and promotes transcription elongation.

It localises to the nucleus. Component of the DRB sensitivity-inducing factor complex (DSIF complex), which regulates mRNA processing and transcription elongation by RNA polymerase II. DSIF positively regulates mRNA capping by stimulating the mRNA guanylyltransferase activity of RNGTT/CAP1A. DSIF also acts cooperatively with the negative elongation factor complex (NELF complex) to enhance transcriptional pausing at sites proximal to the promoter. Transcriptional pausing may facilitate the assembly of an elongation competent RNA polymerase II complex. DSIF and NELF promote pausing by inhibition of the transcription elongation factor TFIIS/S-II. TFIIS/S-II binds to RNA polymerase II at transcription pause sites and stimulates the weak intrinsic nuclease activity of the enzyme. Cleavage of blocked transcripts by RNA polymerase II promotes the resumption of transcription from the new 3' terminus and may allow repeated attempts at transcription through natural pause sites. Following phosphorylation by CDK9, DSIF can also positively regulate transcriptional elongation. Regulation of transcriptional elongation by this protein is required for the expression of genes which control neuronal development. In Danio rerio (Zebrafish), this protein is Transcription elongation factor SPT5 (supt5h).